The following is a 164-amino-acid chain: Putative HTH-type transcriptional regulator ORF2 (164 aa).

One can recognise an HTH rrf2-type domain in the interval 2 to 131; it reads RLTTKGRYAV…SGISLADLVA (130 aa).

This Azotobacter vinelandii protein is Putative HTH-type transcriptional regulator ORF2.